The chain runs to 545 residues: Threonine--tRNA ligase catalytic subunit (545 aa).

The tract at residues 139-433 (DHRLIGEKLD…LLEHFKGKLP (295 aa)) is catalytic. Residues Cys-231, His-282, and His-410 each contribute to the Zn(2+) site.

This sequence belongs to the class-II aminoacyl-tRNA synthetase family. Homodimer. Probably interacts with its editing subunit. Zn(2+) is required as a cofactor.

The protein localises to the cytoplasm. The enzyme catalyses tRNA(Thr) + L-threonine + ATP = L-threonyl-tRNA(Thr) + AMP + diphosphate + H(+). Its function is as follows. Catalyzes the attachment of threonine to tRNA(Thr) in a two-step reaction: L-threonine is first activated by ATP to form Thr-AMP and then transferred to the acceptor end of tRNA(Thr). Also activates L-serine and transfers it to tRNA(Thr) but cannot deacylate incorrectly charged amino acid; unlike most archaea the editing function is found in a freestanding protein. The polypeptide is Threonine--tRNA ligase catalytic subunit (Saccharolobus islandicus (strain L.S.2.15 / Lassen #1) (Sulfolobus islandicus)).